The primary structure comprises 349 residues: MAKTPESLESSINEITDRALDRDCTTLSRHVLQQLQSFSPDAQDLSALMNRIALAGKLVARRMSRAGLMEGVLGFTGEVNVQGESVKKMDVYANDVFISVFKQSGLVCRLASEEMENPYYIPENCPIGRYTLLYDPIDGSSNTDNNLSLGSIFAIRQQEGTDSDGKATDLLANGRKQLAAGYILYGPCTMLVYTIGKGVHSFVLDPSLGEFILTEENIRIPNHGSVYSVNEGNFWQWEESIREYIRYVHRTEGYSARYSGAMVSDIHRILVQGGVFLYPGTIQNPEGKLRLLYETAPLAFLIEQAGGRATTGLVNILDVVPKKLHQRTPLIIGSKEDVAKVESFIQNGH.

Mg(2+) is bound by residues Glu-113, Asp-135, Ile-137, and Asp-138. Residues 138–141, Asn-230, Tyr-258, and Lys-288 each bind substrate; that span reads DGSS. Glu-294 contacts Mg(2+).

It belongs to the FBPase class 1 family. In terms of assembly, homotetramer. Mg(2+) is required as a cofactor.

It localises to the cytoplasm. The catalysed reaction is beta-D-fructose 1,6-bisphosphate + H2O = beta-D-fructose 6-phosphate + phosphate. Its pathway is carbohydrate biosynthesis; Calvin cycle. In Nostoc punctiforme (strain ATCC 29133 / PCC 73102), this protein is Fructose-1,6-bisphosphatase class 1.